Here is a 123-residue protein sequence, read N- to C-terminus: Testis-expressed protein 12 (123 aa).

Positions 1–41 (MMANHLVKPDSRNCKRARELEPQVSDSPQVSSLGKSESSLS) are disordered. Basic and acidic residues predominate over residues 7 to 21 (VKPDSRNCKRARELE). Positions 31-41 (SSLGKSESSLS) are enriched in low complexity.

As to quaternary structure, interacts with SYCE2. Testis (at protein level). Detected in ovary. Expressed in both male and female germ cells.

It is found in the chromosome. Component of the transverse central element of synaptonemal complexes (SCS), formed between homologous chromosomes during meiotic prophase. Requires SYCP1 in order to be incorporated into the central element. The sequence is that of Testis-expressed protein 12 (Tex12) from Mus musculus (Mouse).